Consider the following 404-residue polypeptide: Caspase-1 (404 aa).

Positions 1–91 (MADKVLKDKR…HLAQTLGLSS (91 aa)) constitute a CARD domain. Positions 1-119 (MADKVLKDKR…SLPAFVENMP (119 aa)) are excised as a propeptide. Catalysis depends on residues His-237 and Cys-285. A propeptide spanning residues 298–316 (SPKASTDSWTHQPLMLQSD) is cleaved from the precursor. Ser-302 carries the post-translational modification Phosphoserine.

This sequence belongs to the peptidase C14A family. In terms of assembly, heterotetramer that consists of two anti-parallel arranged heterodimers, each one formed by a 20 kDa (Caspase-1 subunit p20) and a 10 kDa (Caspase-1 subunit p10) subunit. May be a component of the inflammasome, a protein complex which also includes PYCARD, CARD8 and NLRP2 and whose function would be the activation of pro-inflammatory caspases. Component of the AIM2 PANoptosome complex, a multiprotein complex that drives inflammatory cell death (PANoptosis). Both the p10 and p20 subunits interact with MEFV. Interacts with CARD17P/INCA and CARD18. Interacts with SERPINB1; this interaction regulates CASP1 activity. Heterotetramer that consists of two anti-parallel arranged heterodimers, each one formed by a 20 kDa (Caspase-1 subunit p20) and a 10 kDa (Caspase-1 subunit p10) subunit. The two subunits are derived from the precursor sequence by an autocatalytic mechanism. In terms of processing, ubiquitinated via 'Lys-11'-linked polyubiquitination. Deubiquitinated by USP8.

The protein resides in the cytoplasm. The protein localises to the cell membrane. It catalyses the reaction Strict requirement for an Asp residue at position P1 and has a preferred cleavage sequence of Tyr-Val-Ala-Asp-|-.. Its function is as follows. Thiol protease involved in a variety of inflammatory processes by proteolytically cleaving other proteins, such as the precursors of the inflammatory cytokines interleukin-1 beta (IL1B) and interleukin 18 (IL18) as well as the pyroptosis inducer Gasdermin-D (GSDMD), into active mature peptides. Plays a key role in cell immunity as an inflammatory response initiator: once activated through formation of an inflammasome complex, it initiates a pro-inflammatory response through the cleavage of the two inflammatory cytokines IL1B and IL18, releasing the mature cytokines which are involved in a variety of inflammatory processes. Cleaves a tetrapeptide after an Asp residue at position P1. Also initiates pyroptosis, a programmed lytic cell death pathway, through cleavage of GSDMD. In contrast to cleavage of interleukin IL1B, recognition and cleavage of GSDMD is not strictly dependent on the consensus cleavage site but depends on an exosite interface on CASP1 that recognizes and binds the Gasdermin-D, C-terminal (GSDMD-CT) part. Cleaves and activates CASP7 in response to bacterial infection, promoting plasma membrane repair. Upon inflammasome activation, during DNA virus infection but not RNA virus challenge, controls antiviral immunity through the cleavage of CGAS, rendering it inactive. In apoptotic cells, cleaves SPHK2 which is released from cells and remains enzymatically active extracellularly. The chain is Caspase-1 (CASP1) from Canis lupus familiaris (Dog).